The sequence spans 85 residues: Toxin BmKITc (85 aa).

Positions 1 to 21 are cleaved as a signal peptide; sequence MKLFLLLVIFASMLNDGLVNA. The 61-residue stretch at 22–82 folds into the LCN-type CS-alpha/beta domain; it reads DGYIRGSDGC…KWKYESNTCG (61 aa). Cystine bridges form between Cys31-Cys81, Cys35-Cys56, Cys42-Cys63, and Cys46-Cys65.

The protein belongs to the long (4 C-C) scorpion toxin superfamily. Sodium channel inhibitor family. Beta subfamily. In terms of tissue distribution, expressed by the venom gland.

It localises to the secreted. Depressant insect beta-toxins cause a transient contraction paralysis followed by a slow flaccid paralysis. They bind voltage-independently at site-4 of sodium channels (Nav) and shift the voltage of activation toward more negative potentials thereby affecting sodium channel activation and promoting spontaneous and repetitive firing. The sequence is that of Toxin BmKITc from Olivierus martensii (Manchurian scorpion).